A 404-amino-acid chain; its full sequence is Imidazolonepropionase (404 aa).

Fe(3+) contacts are provided by histidine 73 and histidine 75. Zn(2+)-binding residues include histidine 73 and histidine 75. Arginine 82, tyrosine 145, and histidine 178 together coordinate 4-imidazolone-5-propanoate. Position 145 (tyrosine 145) interacts with N-formimidoyl-L-glutamate. Histidine 243 contacts Fe(3+). Residue histidine 243 participates in Zn(2+) binding. Residue glutamine 246 participates in 4-imidazolone-5-propanoate binding. Aspartate 318 lines the Fe(3+) pocket. Aspartate 318 serves as a coordination point for Zn(2+). Residues asparagine 320 and glycine 322 each coordinate N-formimidoyl-L-glutamate. 4-imidazolone-5-propanoate is bound at residue serine 323.

This sequence belongs to the metallo-dependent hydrolases superfamily. HutI family. It depends on Zn(2+) as a cofactor. The cofactor is Fe(3+).

The protein resides in the cytoplasm. The catalysed reaction is 4-imidazolone-5-propanoate + H2O = N-formimidoyl-L-glutamate. It functions in the pathway amino-acid degradation; L-histidine degradation into L-glutamate; N-formimidoyl-L-glutamate from L-histidine: step 3/3. In terms of biological role, catalyzes the hydrolytic cleavage of the carbon-nitrogen bond in imidazolone-5-propanoate to yield N-formimidoyl-L-glutamate. It is the third step in the universal histidine degradation pathway. In Bradyrhizobium diazoefficiens (strain JCM 10833 / BCRC 13528 / IAM 13628 / NBRC 14792 / USDA 110), this protein is Imidazolonepropionase.